A 174-amino-acid polypeptide reads, in one-letter code: NADH-quinone oxidoreductase subunit B (174 aa).

Residues cysteine 53, cysteine 54, cysteine 118, and cysteine 148 each coordinate [4Fe-4S] cluster.

This sequence belongs to the complex I 20 kDa subunit family. As to quaternary structure, NDH-1 is composed of 14 different subunits. Subunits NuoB, C, D, E, F, and G constitute the peripheral sector of the complex. It depends on [4Fe-4S] cluster as a cofactor.

Its subcellular location is the cell inner membrane. The catalysed reaction is a quinone + NADH + 5 H(+)(in) = a quinol + NAD(+) + 4 H(+)(out). NDH-1 shuttles electrons from NADH, via FMN and iron-sulfur (Fe-S) centers, to quinones in the respiratory chain. Couples the redox reaction to proton translocation (for every two electrons transferred, four hydrogen ions are translocated across the cytoplasmic membrane), and thus conserves the redox energy in a proton gradient. This is NADH-quinone oxidoreductase subunit B from Ruegeria sp. (strain TM1040) (Silicibacter sp.).